Reading from the N-terminus, the 486-residue chain is Betaine aldehyde dehydrogenase (486 aa).

The K(+) site is built by Thr-23 and Asp-90. 147 to 149 lines the NAD(+) pocket; the sequence is GAW. The active-site Charge relay system is Lys-159. NAD(+)-binding positions include 173–176 and 226–229; these read KPSE and ESGT. Leu-241 is a K(+) binding site. The Proton acceptor role is filled by Glu-247. Residues Gly-249, Cys-281, and Glu-382 each coordinate NAD(+). The active-site Nucleophile is Cys-281. Residue Cys-281 is modified to Cysteine sulfenic acid (-SOH). Lys-452 and Gly-455 together coordinate K(+). Glu-459 serves as the catalytic Charge relay system.

This sequence belongs to the aldehyde dehydrogenase family. In terms of assembly, dimer of dimers. It depends on K(+) as a cofactor.

It catalyses the reaction betaine aldehyde + NAD(+) + H2O = glycine betaine + NADH + 2 H(+). It participates in amine and polyamine biosynthesis; betaine biosynthesis via choline pathway; betaine from betaine aldehyde: step 1/1. Its function is as follows. Involved in the biosynthesis of the osmoprotectant glycine betaine. Catalyzes the irreversible oxidation of betaine aldehyde to the corresponding acid. In Vibrio vulnificus (strain CMCP6), this protein is Betaine aldehyde dehydrogenase.